The primary structure comprises 370 residues: Cytochrome b (370 aa).

4 helical membrane passes run 25–45 (FGSMLIACSTLQVLTGFFLAV), 69–90 (WLMQNLHAIGASMFFICIYIHI), 105–125 (WLSGTTLLIMLMATAFFGYVL), and 170–190 (FFALHFILPFGIISMSSLHVM). Heme b contacts are provided by His75 and His89. Heme b-binding residues include His174 and His188. His193 provides a ligand contact to a ubiquinone. The next 4 helical transmembrane spans lie at 218–238 (YKDLLMLAAMTTLLLLIVSFS), 280–300 (LGGALALTMSIVILLTVPFTH), 312–332 (FMQMTFWLFAATFMVITWTAT), and 339–358 (FTLIGQAASMIYFLFFISNP).

This sequence belongs to the cytochrome b family. As to quaternary structure, the cytochrome bc1 complex contains 3 respiratory subunits (MT-CYB, CYC1 and UQCRFS1), 2 core proteins (UQCRC1 and UQCRC2) and probably 6 low-molecular weight proteins. Requires heme b as cofactor.

The protein resides in the mitochondrion inner membrane. In terms of biological role, component of the ubiquinol-cytochrome c reductase complex (complex III or cytochrome b-c1 complex) that is part of the mitochondrial respiratory chain. The b-c1 complex mediates electron transfer from ubiquinol to cytochrome c. Contributes to the generation of a proton gradient across the mitochondrial membrane that is then used for ATP synthesis. The polypeptide is Cytochrome b (MT-CYB) (Eunectes notaeus (Yellow anaconda)).